The chain runs to 374 residues: Biotin synthase (374 aa).

The Radical SAM core domain occupies 51-278 (NTVKVNYLVN…DTEIRIAGGR (228 aa)). C66, C70, and C73 together coordinate [4Fe-4S] cluster. [2Fe-2S] cluster-binding residues include C110, C143, C203, and R273. Positions 346-374 (IAGGTSVAGSAPDPAIRRRGAGTDVPANA) are disordered.

The protein belongs to the radical SAM superfamily. Biotin synthase family. As to quaternary structure, homodimer. It depends on [4Fe-4S] cluster as a cofactor. [2Fe-2S] cluster serves as cofactor.

The enzyme catalyses (4R,5S)-dethiobiotin + (sulfur carrier)-SH + 2 reduced [2Fe-2S]-[ferredoxin] + 2 S-adenosyl-L-methionine = (sulfur carrier)-H + biotin + 2 5'-deoxyadenosine + 2 L-methionine + 2 oxidized [2Fe-2S]-[ferredoxin]. It participates in cofactor biosynthesis; biotin biosynthesis; biotin from 7,8-diaminononanoate: step 2/2. In terms of biological role, catalyzes the conversion of dethiobiotin (DTB) to biotin by the insertion of a sulfur atom into dethiobiotin via a radical-based mechanism. This Nocardioides sp. (strain ATCC BAA-499 / JS614) protein is Biotin synthase.